The sequence spans 505 residues: Forkhead box protein O4 (505 aa).

Disordered regions lie at residues 1-66, 175-244, and 257-276; these read MDPE…HSEP, SSWW…SPCP, and RPRS…PMRP. Phosphothreonine; by PKB/AKT1 is present on Thr32. Positions 97 to 215 are required for interaction with FOXK1; the sequence is RRNAWGNQSY…RGRSKGPKKK (119 aa). A DNA-binding region (fork-head) is located at residues 100 to 188; the sequence is AWGNQSYAEL…MLNPDGGKGG (89 aa). Ser197 is modified (phosphoserine; by PKB/AKT1). Basic residues predominate over residues 205–216; the sequence is LRGRSKGPKKKP. A compositionally biased stretch (polar residues) spans 257–271; the sequence is RPRSSSNASTVSTRL. Ser262 carries the phosphoserine; by PKB/AKT1 modification.

As to quaternary structure, interacts with CREBBP/CBP, MYOCD, SIRT1, SRF and YWHAZ. Acetylated by CREBBP/CBP and deacetylated by SIRT1. Binding of YWHAZ inhibits DNA-binding. Interacts with USP7; the interaction is enhanced in presence of hydrogen peroxide and occurs independently of TP53. Interacts with NLK, and this inhibits monoubiquitination and transcriptional activity. Interacts with FOXK1; the interaction inhibits MEF2C transactivation activity. Acetylation by CREBBP/CBP is induced by oxidative stress and inhibits transcriptional activity. Deacetylation by SIRT1 is NAD-dependent and stimulates transcriptional activity. In terms of processing, phosphorylation by PKB/AKT1 inhibits transcriptional activity and is responsible for cytoplasmic localization. May be phosphorylated at multiple sites by NLK. Post-translationally, monoubiquitinated; monoubiquitination is induced by oxidative stress and reduced by deacetylase inhibitors; results in its relocalization to the nucleus and its increased transcriptional activity. Deubiquitinated by USP7; deubiquitination is induced by oxidative stress; enhances its interaction with USP7 and consequently, deubiquitination; increases its translocation to the cytoplasm and inhibits its transcriptional activity. Hydrogene-peroxide-induced ubiquitination and USP7-mediated deubiquitination have no major effect on its protein stability. As to expression, strongly expressed in brown adipose tissue and weakly in white adipose tissue (at protein level). Expressed in skeletal muscle.

The protein resides in the cytoplasm. It localises to the nucleus. Transcription factor involved in the regulation of the insulin signaling pathway. Binds to insulin-response elements (IREs) and can activate transcription of IGFBP1. Down-regulates expression of HIF1A and suppresses hypoxia-induced transcriptional activation of HIF1A-modulated genes. Also involved in negative regulation of the cell cycle. Involved in increased proteasome activity in embryonic stem cells (ESCs) by activating expression of PSMD11 in ESCs, leading to enhanced assembly of the 26S proteasome, followed by higher proteasome activity. Represses smooth muscle cell differentiation by inhibiting the transcriptional coactivator activity of myocardin. This chain is Forkhead box protein O4 (Foxo4), found in Mus musculus (Mouse).